Here is a 76-residue protein sequence, read N- to C-terminus: uncharacterized protein (76 aa).

This is an uncharacterized protein from Bacillus subtilis (strain 168).